The sequence spans 817 residues: DNA mismatch repair protein MutS (817 aa).

ATP is bound at residue 604–611 (GPNMSGKS).

It belongs to the DNA mismatch repair MutS family.

This protein is involved in the repair of mismatches in DNA. It is possible that it carries out the mismatch recognition step. This protein has a weak ATPase activity. The polypeptide is DNA mismatch repair protein MutS (Petrotoga mobilis (strain DSM 10674 / SJ95)).